Consider the following 308-residue polypeptide: Olfactory receptor OR9H1 (308 aa).

The Extracellular portion of the chain corresponds to 1-26 (MVNFTHVSEFVLLGFQGGPGMQAMLF). The chain crosses the membrane as a helical span at residues 27–47 (LIFLILYGIAVVGNLGMIVII). The Cytoplasmic portion of the chain corresponds to 48-58 (WVDAHLHTPMY). Residues 59–81 (AFLQSLSLLDICYSSTIAPRALA) form a helical membrane-spanning segment. The Extracellular portion of the chain corresponds to 82 to 95 (NSMQEDHTISFGGC). Cysteines 95 and 177 form a disulfide. The helical transmembrane segment at 96–116 (AAQFFFLSLFGITEAFLLAAM) threads the bilayer. Over 117-137 (AYDRFIAICNPLLYSVSMSHQ) the chain is Cytoplasmic. Residues 138–158 (VCVLLISGSYLWGVVNAIAQT) form a helical membrane-spanning segment. Over 159 to 203 (TMTFRLPFCGSNEINDFFCDVPPLLSLSCSDTFINQLVLLGLCGS) the chain is Extracellular. The helical transmembrane segment at 204–224 (IIVSTFLIVLVSYIYIISTIL) threads the bilayer. The Cytoplasmic portion of the chain corresponds to 225-245 (RIPTMQGCQKAFSTCASHLTG). Residues 246 to 266 (VCLFFGTVFFMYAQPSAIFFM) form a helical membrane-spanning segment. The Extracellular segment spans residues 267 to 269 (EQS). A helical membrane pass occupies residues 270–290 (KIVSIFYTMVIPMLNPLIYSL). Residues 291–308 (RNKEVKQALRRSMQKLSL) lie on the Cytoplasmic side of the membrane.

The protein belongs to the G-protein coupled receptor 1 family.

Its subcellular location is the cell membrane. Functionally, odorant receptor. This chain is Olfactory receptor OR9H1, found in Homo sapiens (Human).